The sequence spans 123 residues: Ribosome-binding factor A (123 aa).

It belongs to the RbfA family. As to quaternary structure, monomer. Binds 30S ribosomal subunits, but not 50S ribosomal subunits or 70S ribosomes.

The protein resides in the cytoplasm. One of several proteins that assist in the late maturation steps of the functional core of the 30S ribosomal subunit. Associates with free 30S ribosomal subunits (but not with 30S subunits that are part of 70S ribosomes or polysomes). Required for efficient processing of 16S rRNA. May interact with the 5'-terminal helix region of 16S rRNA. This Neisseria gonorrhoeae (strain NCCP11945) protein is Ribosome-binding factor A.